The primary structure comprises 453 residues: Na(+)/H(+) antiporter NhaA (453 aa).

12 helical membrane-spanning segments follow: residues 27 to 47 (FLHI…AALM), 78 to 98 (LHFW…GMEI), 114 to 134 (ILPI…YFSF), 143 to 163 (GWAV…ALLG), 172 to 192 (IILL…IAFF), 201 to 221 (GLVI…IGFA), 222 to 242 (SAWL…VTGI), 249 to 269 (VILG…PLTI), 316 to 336 (PWVA…VSFA), 346 to 366 (FLIV…GIIT), 385 to 405 (WAGI…SIFV), and 421 to 441 (IGVL…GLIY).

Belongs to the NhaA Na(+)/H(+) (TC 2.A.33) antiporter family.

The protein resides in the cell inner membrane. The enzyme catalyses Na(+)(in) + 2 H(+)(out) = Na(+)(out) + 2 H(+)(in). Functionally, na(+)/H(+) antiporter that extrudes sodium in exchange for external protons. In Bartonella henselae (strain ATCC 49882 / DSM 28221 / CCUG 30454 / Houston 1) (Rochalimaea henselae), this protein is Na(+)/H(+) antiporter NhaA.